A 192-amino-acid chain; its full sequence is Ribosome hibernation promotion factor (192 aa).

A disordered region spans residues 95 to 129 (RVNRKHKTHGEPEAFVAEVQEAPPENVDDVNAEPT). Acidic residues predominate over residues 120–129 (NVDDVNAEPT).

This sequence belongs to the HPF/YfiA ribosome-associated protein family. Long HPF subfamily. Interacts with 100S ribosomes.

The protein localises to the cytoplasm. Required for dimerization of active 70S ribosomes into 100S ribosomes in stationary phase; 100S ribosomes are translationally inactive and sometimes present during exponential growth. The sequence is that of Ribosome hibernation promotion factor from Staphylococcus haemolyticus (strain JCSC1435).